We begin with the raw amino-acid sequence, 585 residues long: YTH domain-containing family protein 3 (585 aa).

Disordered stretches follow at residues 1 to 52, 243 to 277, and 304 to 351; these read MSAT…YPPM, RKPA…MNIG, and PQPL…QQLQ. Serine 2 is modified (N-acetylserine). Residues 15–24 are compositionally biased toward polar residues; that stretch reads NKVSVQNGSI. Position 23 is a phosphoserine (serine 23). Basic residues predominate over residues 244–254; the sequence is KPAKPQPKLKP. Positions 329–351 are enriched in low complexity; that stretch reads QQQQGPQPQAQPHQVQPQQQQLQ. Positions 416-550 constitute a YTH domain; it reads GRVFIIKSYS…EKAKQVLKII (135 aa). RNA is bound by residues 422 to 424, aspartate 428, 438 to 439, asparagine 468, tryptophan 492, and tryptophan 497; these read KSY and WC.

This sequence belongs to the YTHDF family. YTHDF3 subfamily. As to quaternary structure, interacts with CNOT1; promoting recruitment of the CCR4-NOT complex. Interacts with YTHDF1. Interacts with YTHDF2. Interacts with PAN3. Post-translationally, (Microbial infection) Proteolytically cleaved by HIV-1 protease when incorporated into HIV-1 particles in a nucleocapsid-dependent-manner. Cleavage by HIV-1 protease probably ensures optimal infectivity of the mature virion.

The protein localises to the cytoplasm. It is found in the cytosol. Its subcellular location is the P-body. It localises to the stress granule. Functionally, specifically recognizes and binds N6-methyladenosine (m6A)-containing RNAs, and regulates their stability. M6A is a modification present at internal sites of mRNAs and some non-coding RNAs and plays a role in mRNA stability and processing. Acts as a regulator of mRNA stability by promoting degradation of m6A-containing mRNAs via interaction with the CCR4-NOT complex or PAN3. The YTHDF paralogs (YTHDF1, YTHDF2 and YTHDF3) share m6A-containing mRNAs targets and act redundantly to mediate mRNA degradation and cellular differentiation. Acts as a negative regulator of type I interferon response by down-regulating interferon-stimulated genes (ISGs) expression: acts by binding to FOXO3 mRNAs. Binds to FOXO3 mRNAs independently of METTL3-mediated m6A modification. Can also act as a regulator of mRNA stability in cooperation with YTHDF2 by binding to m6A-containing mRNA and promoting their degradation. Recognizes and binds m6A-containing circular RNAs (circRNAs); circRNAs are generated through back-splicing of pre-mRNAs, a non-canonical splicing process promoted by dsRNA structures across circularizing exons. Promotes formation of phase-separated membraneless compartments, such as P-bodies or stress granules, by undergoing liquid-liquid phase separation upon binding to mRNAs containing multiple m6A-modified residues: polymethylated mRNAs act as a multivalent scaffold for the binding of YTHDF proteins, juxtaposing their disordered regions and thereby leading to phase separation. The resulting mRNA-YTHDF complexes then partition into different endogenous phase-separated membraneless compartments, such as P-bodies, stress granules or neuronal RNA granules. May also recognize and bind N1-methyladenosine (m1A)-containing mRNAs: inhibits trophoblast invasion by binding to m1A-methylated transcripts of IGF1R, promoting their degradation. In terms of biological role, has some antiviral activity against HIV-1 virus: incorporated into HIV-1 particles in a nucleocapsid-dependent manner and reduces viral infectivity in the next cycle of infection. May interfere with this early step of the viral life cycle by binding to N6-methyladenosine (m6A) modified sites on the HIV-1 RNA genome. The polypeptide is YTH domain-containing family protein 3 (Homo sapiens (Human)).